A 587-amino-acid polypeptide reads, in one-letter code: Deoxynucleoside triphosphate triphosphohydrolase sahd-1 (587 aa).

One can recognise an HD domain in the interval 92–262 (RFVHSLGTFS…GHDVDKMDYL (171 aa)). His95, His134, Asp135, and Asp257 together coordinate Zn(2+). Residues 554 to 587 (EKFLTPRKRSPQDSPDEVSSSCSTAKRRLEFGSS) are disordered. Thr558 is modified (phosphothreonine).

The protein belongs to the SAMHD1 family. Homodimer. Homotetramer; in dGTP-bound form. Zn(2+) serves as cofactor.

The protein localises to the nucleus. The protein resides in the chromosome. The enzyme catalyses a 2'-deoxyribonucleoside 5'-triphosphate + H2O = a 2'-deoxyribonucleoside + triphosphate + H(+). Allosterically activated and regulated by GTP or dGTP. Allosteric activation promotes the formation of highly active homotetramers. Phosphorylation impairs homotetramerization, thereby inhibiting dNTPase activity. Its function is as follows. Has deoxynucleoside triphosphate (dNTPase) activity. dNTPase activity acts as a regulator of DNA precursor pools by regulating dNTP pools. Phosphorylation acts as a switch to control dNTPase-dependent and -independent functions. The polypeptide is Deoxynucleoside triphosphate triphosphohydrolase sahd-1 (Caenorhabditis elegans).